The chain runs to 293 residues: Acetyl-coenzyme A carboxylase carboxyl transferase subunit beta (293 aa).

The region spanning leucine 29 to aspartate 293 is the CoA carboxyltransferase N-terminal domain. 4 residues coordinate Zn(2+): cysteine 33, cysteine 36, cysteine 52, and cysteine 55. The C4-type zinc-finger motif lies at cysteine 33 to cysteine 55.

This sequence belongs to the AccD/PCCB family. In terms of assembly, acetyl-CoA carboxylase is a heterohexamer composed of biotin carboxyl carrier protein (AccB), biotin carboxylase (AccC) and two subunits each of ACCase subunit alpha (AccA) and ACCase subunit beta (AccD). Zn(2+) serves as cofactor.

The protein localises to the cytoplasm. The enzyme catalyses N(6)-carboxybiotinyl-L-lysyl-[protein] + acetyl-CoA = N(6)-biotinyl-L-lysyl-[protein] + malonyl-CoA. Its pathway is lipid metabolism; malonyl-CoA biosynthesis; malonyl-CoA from acetyl-CoA: step 1/1. Functionally, component of the acetyl coenzyme A carboxylase (ACC) complex. Biotin carboxylase (BC) catalyzes the carboxylation of biotin on its carrier protein (BCCP) and then the CO(2) group is transferred by the transcarboxylase to acetyl-CoA to form malonyl-CoA. The chain is Acetyl-coenzyme A carboxylase carboxyl transferase subunit beta from Alcanivorax borkumensis (strain ATCC 700651 / DSM 11573 / NCIMB 13689 / SK2).